The following is a 156-amino-acid chain: Ribosomal RNA large subunit methyltransferase H (156 aa).

S-adenosyl-L-methionine-binding positions include Leu72, Gly103, and 122-127; that span reads LSSLTL.

The protein belongs to the RNA methyltransferase RlmH family. In terms of assembly, homodimer.

The protein localises to the cytoplasm. It carries out the reaction pseudouridine(1915) in 23S rRNA + S-adenosyl-L-methionine = N(3)-methylpseudouridine(1915) in 23S rRNA + S-adenosyl-L-homocysteine + H(+). Specifically methylates the pseudouridine at position 1915 (m3Psi1915) in 23S rRNA. The polypeptide is Ribosomal RNA large subunit methyltransferase H (Dechloromonas aromatica (strain RCB)).